The primary structure comprises 576 residues: Lysine--tRNA ligase (576 aa).

Mg(2+) is bound by residues Glu-412 and Glu-419.

It belongs to the class-II aminoacyl-tRNA synthetase family. In terms of assembly, homodimer. Requires Mg(2+) as cofactor.

Its subcellular location is the cytoplasm. The enzyme catalyses tRNA(Lys) + L-lysine + ATP = L-lysyl-tRNA(Lys) + AMP + diphosphate. This Phocaeicola vulgatus (strain ATCC 8482 / DSM 1447 / JCM 5826 / CCUG 4940 / NBRC 14291 / NCTC 11154) (Bacteroides vulgatus) protein is Lysine--tRNA ligase.